The sequence spans 340 residues: Dihydroorotate dehydrogenase (quinone) (340 aa).

Residues 67–71 and Thr91 contribute to the FMN site; that span reads AGFDK. Residue Lys71 coordinates substrate. A substrate-binding site is contributed by 116–120; it reads NRMGF. FMN is bound by residues Asn143 and Asn176. Asn176 contacts substrate. Ser179 (nucleophile) is an active-site residue. Position 181 (Asn181) interacts with substrate. Positions 217 and 245 each coordinate FMN. Position 246 to 247 (246 to 247) interacts with substrate; that stretch reads NT. FMN is bound by residues Gly267, Gly296, and 317–318; that span reads YT.

It belongs to the dihydroorotate dehydrogenase family. Type 2 subfamily. As to quaternary structure, monomer. FMN is required as a cofactor.

It localises to the cell membrane. The enzyme catalyses (S)-dihydroorotate + a quinone = orotate + a quinol. It participates in pyrimidine metabolism; UMP biosynthesis via de novo pathway; orotate from (S)-dihydroorotate (quinone route): step 1/1. Its function is as follows. Catalyzes the conversion of dihydroorotate to orotate with quinone as electron acceptor. The sequence is that of Dihydroorotate dehydrogenase (quinone) from Christiangramia forsetii (strain DSM 17595 / CGMCC 1.15422 / KT0803) (Gramella forsetii).